The following is a 357-amino-acid chain: Homoserine O-acetyltransferase (357 aa).

Residues 51-340 enclose the AB hydrolase-1 domain; the sequence is NVIVICHALT…EPYGHDAFLI (290 aa). Serine 147 functions as the Nucleophile in the catalytic mechanism. Arginine 216 contributes to the substrate binding site. Active-site residues include aspartate 306 and histidine 335. Aspartate 336 contributes to the substrate binding site.

Belongs to the AB hydrolase superfamily. MetX family. Homodimer.

The protein resides in the cytoplasm. The catalysed reaction is L-homoserine + acetyl-CoA = O-acetyl-L-homoserine + CoA. Its pathway is amino-acid biosynthesis; L-methionine biosynthesis via de novo pathway; O-acetyl-L-homoserine from L-homoserine: step 1/1. Transfers an acetyl group from acetyl-CoA to L-homoserine, forming acetyl-L-homoserine. In Chlorobium chlorochromatii (strain CaD3), this protein is Homoserine O-acetyltransferase.